The primary structure comprises 403 residues: ATP phosphoribosyltransferase regulatory subunit (403 aa).

This sequence belongs to the class-II aminoacyl-tRNA synthetase family. HisZ subfamily. As to quaternary structure, heteromultimer composed of HisG and HisZ subunits.

Its subcellular location is the cytoplasm. Its pathway is amino-acid biosynthesis; L-histidine biosynthesis; L-histidine from 5-phospho-alpha-D-ribose 1-diphosphate: step 1/9. Required for the first step of histidine biosynthesis. May allow the feedback regulation of ATP phosphoribosyltransferase activity by histidine. This chain is ATP phosphoribosyltransferase regulatory subunit, found in Nostoc punctiforme (strain ATCC 29133 / PCC 73102).